The primary structure comprises 101 residues: Small ribosomal subunit protein uS14 (101 aa).

The protein belongs to the universal ribosomal protein uS14 family. As to quaternary structure, part of the 30S ribosomal subunit. Contacts proteins S3 and S10.

Binds 16S rRNA, required for the assembly of 30S particles and may also be responsible for determining the conformation of the 16S rRNA at the A site. The chain is Small ribosomal subunit protein uS14 from Rhizorhabdus wittichii (strain DSM 6014 / CCUG 31198 / JCM 15750 / NBRC 105917 / EY 4224 / RW1) (Sphingomonas wittichii).